Here is a 66-residue protein sequence, read N- to C-terminus: Large ribosomal subunit protein bL31 (66 aa).

Residues cysteine 16, cysteine 18, cysteine 36, and cysteine 39 each coordinate Zn(2+).

The protein belongs to the bacterial ribosomal protein bL31 family. Type A subfamily. In terms of assembly, part of the 50S ribosomal subunit. The cofactor is Zn(2+).

Its function is as follows. Binds the 23S rRNA. The chain is Large ribosomal subunit protein bL31 from Thermodesulfovibrio yellowstonii (strain ATCC 51303 / DSM 11347 / YP87).